The chain runs to 786 residues: LPS-assembly protein LptD (786 aa).

The N-terminal stretch at 1-24 (MKKRIPTLLATMIASALYSHQGLA) is a signal peptide. Cystine bridges form between C31–C726 and C173–C727.

This sequence belongs to the LptD family. Component of the lipopolysaccharide transport and assembly complex. Interacts with LptE and LptA. Post-translationally, contains two intramolecular disulfide bonds.

The protein resides in the cell outer membrane. In terms of biological role, together with LptE, is involved in the assembly of lipopolysaccharide (LPS) at the surface of the outer membrane. This chain is LPS-assembly protein LptD, found in Salmonella choleraesuis (strain SC-B67).